The sequence spans 103 residues: Ghrelin (103 aa).

Residues 1–26 (MPLRRRASHMFVLLCALSLCVESVKG) form the signal peptide. A disordered region spans residues 27–51 (GTSFLSPAQKPQGRRPPRMGRRDVA). Residue Ser-29 is the site of O-decanoyl serine; alternate attachment. Residue Ser-29 is the site of O-hexanoyl serine; alternate attachment. A lipid anchor (O-octanoyl serine; alternate) is attached at Ser-29. Residue Gln-38 is modified to Glutamine amide. Position 45 is a methionine amide (Met-45). Residues 49-103 (DVAEPEIPVIKEDDQFMMSAPFELSVSLSEAEYEKYGPVLQKVLVNLLGDSPLEF) constitute a propeptide, removed in mature form.

Belongs to the motilin family. Post-translationally, O-octanoylated by GOAT/MBOAT4. O-octanoylation or O-decanoylation is essential for activity. The O-decanoylated form differs in the length of the carbon backbone of the carboxylic acid forming an ester bond with Ser-29. In terms of tissue distribution, expressed in the telencephalon, hypothalamus, pituitary, intestine, liver, spleen and gill, with expression strongest in the intestine.

It is found in the secreted. Its function is as follows. Ligand for growth hormone secretagogue receptor type 1 (GHSR). Induces the release of growth hormone from the pituitary. Induces adiposity and stimulates gastric acid secretion. Involved in growth regulation. Has an appetite-stimulating effect. This is Ghrelin (ghrl) from Carassius auratus (Goldfish).